Here is a 327-residue protein sequence, read N- to C-terminus: Vacuolar protein sorting-associated protein 26A (327 aa).

Residues 306–327 form a disordered region; sequence RTNFHQRFESPESQASAEQPEM. S315 is subject to Phosphoserine. A compositionally biased stretch (polar residues) spans 316–327; that stretch reads PESQASAEQPEM.

This sequence belongs to the VPS26 family. In terms of assembly, component of the heterotrimeric retromer cargo-selective complex (CSC), also described as vacuolar protein sorting subcomplex (VPS), formed by VPS26 (VPS26A or VPS26B), VPS29 and VPS35. The CSC has a highly elongated structure with VPS26 and VPS29 binding independently at opposite distal ends of VPS35 as central platform. The CSC is believed to associate with variable sorting nexins to form functionally distinct retromer complex variants. The originally described retromer complex (also called SNX-BAR retromer) is a pentamer containing the CSC and a heterodimeric membrane-deforming subcomplex formed between SNX1 or SNX2 and SNX5 or SNX6 (also called SNX-BAR subcomplex); the respective CSC and SNX-BAR subcomplexes associate with low affinity. The CSC associates with SNX3 to form a SNX3-retromer complex. The CSC associates with SNX27, the WASH complex and the SNX-BAR subcomplex to form the SNX27-retromer complex. Interacts with VPS29, VPS35, SNX1, SNX2, SNX5, SNX6, SNX3, SNX27, RAB7A, ECPAS, EHD1, WASHC5, SORL1.

Its subcellular location is the cytoplasm. It localises to the endosome membrane. The protein resides in the early endosome. In terms of biological role, acts as a component of the retromer cargo-selective complex (CSC). The CSC is believed to be the core functional component of retromer or respective retromer complex variants acting to prevent missorting of selected transmembrane cargo proteins into the lysosomal degradation pathway. The recruitment of the CSC to the endosomal membrane involves RAB7A and SNX3. The SNX-BAR retromer mediates retrograde transport of cargo proteins from endosomes to the trans-Golgi network (TGN) and is involved in endosome-to-plasma membrane transport for cargo protein recycling. The SNX3-retromer mediates the retrograde endosome-to-TGN transport of WLS distinct from the SNX-BAR retromer pathway. The SNX27-retromer is believed to be involved in endosome-to-plasma membrane trafficking and recycling of a broad spectrum of cargo proteins. The CSC seems to act as recruitment hub for other proteins, such as the WASH complex and TBC1D5. Required for retrograde transport of lysosomal enzyme receptor IGF2R. Required to regulate transcytosis of the polymeric immunoglobulin receptor (pIgR-pIgA). Required for the endosomal localization of WASHC2A (indicative for the WASH complex). Required for the endosomal localization of TBC1D5. Mediates retromer cargo recognition of SORL1 and is involved in trafficking of SORL1 implicated in sorting and processing of APP. Involved in retromer-independent lysosomal sorting of F2R. Involved in recycling of ADRB2. Enhances the affinity of SNX27 for PDZ-binding motifs in cargo proteins. The polypeptide is Vacuolar protein sorting-associated protein 26A (Homo sapiens (Human)).